Consider the following 70-residue polypeptide: UPF0352 protein Sfri_2492 (70 aa).

It belongs to the UPF0352 family.

In Shewanella frigidimarina (strain NCIMB 400), this protein is UPF0352 protein Sfri_2492.